The primary structure comprises 86 residues: Anti-adapter protein IraP (86 aa).

Residues 1-42 (MKNLIAELLVKLAQKEEESKELVAQVEALEIVVTALLRQMAQ) are a coiled coil.

The protein belongs to the IraP family. As to quaternary structure, interacts with RssB.

Its subcellular location is the cytoplasm. Inhibits RpoS proteolysis by regulating RssB activity, thereby increasing the stability of the sigma stress factor RpoS especially during phosphate starvation, but also in stationary phase and during nitrogen starvation. Its effect on RpoS stability is due to its interaction with RssB, which probably blocks the interaction of RssB with RpoS, and the consequent delivery of the RssB-RpoS complex to the ClpXP protein degradation pathway. This chain is Anti-adapter protein IraP, found in Enterobacter sp. (strain 638).